The following is a 265-amino-acid chain: 5'-nucleotidase SurE (265 aa).

D12, D13, S43, and N91 together coordinate a divalent metal cation.

It belongs to the SurE nucleotidase family. A divalent metal cation is required as a cofactor.

Its subcellular location is the cytoplasm. It carries out the reaction a ribonucleoside 5'-phosphate + H2O = a ribonucleoside + phosphate. Nucleotidase that shows phosphatase activity on nucleoside 5'-monophosphates. This Haloquadratum walsbyi (strain DSM 16790 / HBSQ001) protein is 5'-nucleotidase SurE.